We begin with the raw amino-acid sequence, 702 residues long: Methionine--tRNA ligase (702 aa).

A 'HIGH' region motif is present at residues 23 to 33; it reads PYANGPLHLGH. The Zn(2+) site is built by Cys154, Cys157, Cys167, and Cys170. A 'KMSKS' region motif is present at residues 341 to 345; sequence KMSKS. Lys344 contributes to the ATP binding site. Residues 562–593 form a disordered region; that stretch reads LAPPPASAKQQNASMSNTAPPPTAEEPETTAP. The segment covering 569-578 has biased composition (polar residues); it reads AKQQNASMSN. In terms of domain architecture, tRNA-binding spans 599 to 702; that stretch reads DFAKLDLRIG…SSAQPGMPVR (104 aa).

It belongs to the class-I aminoacyl-tRNA synthetase family. MetG type 1 subfamily. In terms of assembly, homodimer. It depends on Zn(2+) as a cofactor.

The protein resides in the cytoplasm. It carries out the reaction tRNA(Met) + L-methionine + ATP = L-methionyl-tRNA(Met) + AMP + diphosphate. Its function is as follows. Is required not only for elongation of protein synthesis but also for the initiation of all mRNA translation through initiator tRNA(fMet) aminoacylation. This chain is Methionine--tRNA ligase, found in Xylella fastidiosa (strain M12).